Consider the following 807-residue polypeptide: Spondin-1 (807 aa).

Residues 1-28 form the signal peptide; sequence MRLSPVSLRLSRGPALLALALPLAAALA. A Reelin domain is found at 29-194; it reads FSDETLDKVT…DPTLDGVTDR (166 aa). 17 disulfides stabilise this stretch: cysteine 44–cysteine 128, cysteine 156–cysteine 182, cysteine 199–cysteine 336, cysteine 200–cysteine 340, cysteine 202–cysteine 415, cysteine 443–cysteine 480, cysteine 454–cysteine 489, cysteine 459–cysteine 494, cysteine 502–cysteine 538, cysteine 513–cysteine 517, cysteine 548–cysteine 554, cysteine 559–cysteine 595, cysteine 570–cysteine 574, cysteine 605–cysteine 610, cysteine 615–cysteine 650, cysteine 626–cysteine 630, and cysteine 660–cysteine 665. The Spondin domain maps to 195–388; that stretch reads PILDCCACGT…LTSLDHPQSP (194 aa). The N-linked (GlcNAc...) asparagine glycan is linked to asparagine 214. Residues aspartate 325, aspartate 354, and aspartate 358 each contribute to the Ca(2+) site. TSP type-1 domains follow at residues 442–495, 501–555, 558–611, 614–666, and 668–721; these read TCIY…PGCS, TCTM…EECS, SCLV…PECH, PCLL…PECP, and DCEL…RKCL. N-linked (GlcNAc...) asparagine glycosylation occurs at asparagine 681. Residues 732–746 are compositionally biased toward basic and acidic residues; that stretch reads REARESRRSEQLREE. The disordered stretch occupies residues 732–752; sequence REARESRRSEQLREESDGEQF. The TSP type-1 6 domain occupies 754–806; sequence GCRMRPWTAWSECTKLCGGGIQERYMTVKKRFKSSQFTSCKDKKEIRACNVHP.

In terms of assembly, binds to the central extracellular domain of APP and inhibits beta-secretase cleavage of APP.

It localises to the secreted. Its subcellular location is the extracellular space. The protein localises to the extracellular matrix. In terms of biological role, cell adhesion protein that promotes the attachment of spinal cord and sensory neuron cells and the outgrowth of neurites in vitro. May contribute to the growth and guidance of axons in both the spinal cord and the PNS. This is Spondin-1 (Spon1) from Mus musculus (Mouse).